Here is a 337-residue protein sequence, read N- to C-terminus: Glyceraldehyde-3-phosphate dehydrogenase (337 aa).

NAD(+) is bound by residues Arg-12–Ile-13, Asp-34, and Arg-79. D-glyceraldehyde 3-phosphate-binding positions include Ser-150–Thr-152, Thr-181, Thr-210–Gly-211, and Arg-233. Residue Cys-151 is the Nucleophile of the active site. Asn-315 serves as a coordination point for NAD(+).

This sequence belongs to the glyceraldehyde-3-phosphate dehydrogenase family. In terms of assembly, homotetramer.

Its subcellular location is the cytoplasm. The catalysed reaction is D-glyceraldehyde 3-phosphate + phosphate + NAD(+) = (2R)-3-phospho-glyceroyl phosphate + NADH + H(+). Its pathway is carbohydrate degradation; glycolysis; pyruvate from D-glyceraldehyde 3-phosphate: step 1/5. The protein is Glyceraldehyde-3-phosphate dehydrogenase of Cryphonectria parasitica (Chestnut blight fungus).